A 612-amino-acid chain; its full sequence is Elongation factor 4 (612 aa).

One can recognise a tr-type G domain in the interval 11 to 193; that stretch reads KHIRNFSIIA…KLVTDVPAPT (183 aa). Residues 23–28 and 140–143 each bind GTP; these read DHGKST and NKID.

The protein belongs to the TRAFAC class translation factor GTPase superfamily. Classic translation factor GTPase family. LepA subfamily.

It is found in the cell membrane. The catalysed reaction is GTP + H2O = GDP + phosphate + H(+). Its function is as follows. Required for accurate and efficient protein synthesis under certain stress conditions. May act as a fidelity factor of the translation reaction, by catalyzing a one-codon backward translocation of tRNAs on improperly translocated ribosomes. Back-translocation proceeds from a post-translocation (POST) complex to a pre-translocation (PRE) complex, thus giving elongation factor G a second chance to translocate the tRNAs correctly. Binds to ribosomes in a GTP-dependent manner. The sequence is that of Elongation factor 4 from Latilactobacillus sakei subsp. sakei (strain 23K) (Lactobacillus sakei subsp. sakei).